The chain runs to 645 residues: Methionine--tRNA ligase (645 aa).

The short motif at 13–23 is the 'HIGH' region element; it reads YYPSTNLHIGN. Positions 128, 131, 145, and 148 each coordinate Zn(2+). The short motif at 298 to 302 is the 'KMSKS' region element; it reads KMSKS. ATP is bound at residue Lys-301. Residues 544–645 enclose the tRNA-binding domain; sequence DFDKIDLRVV…GEMLTGSQVR (102 aa).

It belongs to the class-I aminoacyl-tRNA synthetase family. MetG type 2A subfamily. Homodimer. The cofactor is Zn(2+).

The protein localises to the cytoplasm. The enzyme catalyses tRNA(Met) + L-methionine + ATP = L-methionyl-tRNA(Met) + AMP + diphosphate. Is required not only for elongation of protein synthesis but also for the initiation of all mRNA translation through initiator tRNA(fMet) aminoacylation. The polypeptide is Methionine--tRNA ligase (metG) (Clostridium perfringens (strain 13 / Type A)).